A 248-amino-acid polypeptide reads, in one-letter code: Probable phosphatase VF_A0065 (248 aa).

9 residues coordinate Zn(2+): His8, His10, His16, His41, Glu74, His102, His132, Asp194, and His196.

It belongs to the PHP family. Zn(2+) is required as a cofactor.

This chain is Probable phosphatase VF_A0065, found in Aliivibrio fischeri (strain ATCC 700601 / ES114) (Vibrio fischeri).